The chain runs to 286 residues: Elongation factor Ts (286 aa).

Residues 82–85 (TDFV) form an involved in Mg(2+) ion dislocation from EF-Tu region.

The protein belongs to the EF-Ts family.

It is found in the cytoplasm. Associates with the EF-Tu.GDP complex and induces the exchange of GDP to GTP. It remains bound to the aminoacyl-tRNA.EF-Tu.GTP complex up to the GTP hydrolysis stage on the ribosome. The chain is Elongation factor Ts from Hahella chejuensis (strain KCTC 2396).